A 195-amino-acid chain; its full sequence is Thymidylate kinase (195 aa).

7 to 14 (GIDGVGKS) contacts ATP.

The protein belongs to the thymidylate kinase family.

It carries out the reaction dTMP + ATP = dTDP + ADP. Functionally, phosphorylation of dTMP to form dTDP in both de novo and salvage pathways of dTTP synthesis. The chain is Thymidylate kinase from Campylobacter hominis (strain ATCC BAA-381 / DSM 21671 / CCUG 45161 / LMG 19568 / NCTC 13146 / CH001A).